The sequence spans 382 residues: Alanine racemase 1 (382 aa).

The active-site Proton acceptor; specific for D-alanine is the Lys39. Lys39 carries the N6-(pyridoxal phosphate)lysine modification. Arg138 lines the substrate pocket. The Proton acceptor; specific for L-alanine role is filled by Tyr265. Met312 is a substrate binding site.

The protein belongs to the alanine racemase family. Pyridoxal 5'-phosphate is required as a cofactor.

It carries out the reaction L-alanine = D-alanine. It functions in the pathway amino-acid biosynthesis; D-alanine biosynthesis; D-alanine from L-alanine: step 1/1. Catalyzes the interconversion of L-alanine and D-alanine. May also act on other amino acids. The chain is Alanine racemase 1 (alr1) from Staphylococcus aureus (strain NCTC 8325 / PS 47).